Reading from the N-terminus, the 638-residue chain is Poly(A)-specific ribonuclease PARN (638 aa).

Residues Asp-28 and Glu-30 each contribute to the a divalent metal cation site. A disordered region spans residues Arg-143 to Asn-165. The segment covering Gln-152–Asn-165 has biased composition (polar residues). Phosphoserine is present on residues Ser-163 and Ser-167. The R3H domain occupies Lys-178–Asp-245. The residue at position 220 (Lys-220) is an N6-acetyllysine. Asp-292 and Asp-382 together coordinate a divalent metal cation. The residue at position 499 (Lys-499) is an N6-acetyllysine. A Phosphoserine modification is found at Ser-530. Ser-557 is subject to Phosphoserine; by MAPKAPK2. Positions Arg-573–Trp-638 are disordered. Residues Ser-583 and Ser-587 each carry the phosphoserine modification. Basic residues predominate over residues Lys-606–Lys-615. Phosphoserine is present on residues Ser-619, Ser-623, and Ser-627.

It belongs to the CAF1 family. Homodimer. Found in a mRNA decay complex with RENT1, RENT2 and RENT3B. Interacts with KHSRP. Interacts with CELF1/CUGBP1. Interacts with ZC3HAV1 in an RNA-independent manner. Interacts with DHX36. It depends on Mg(2+) as a cofactor. Post-translationally, phosphorylation by MAPKAPK2, preventing GADD45A mRNA degradation after genotoxic stress.

The protein localises to the nucleus. It is found in the cytoplasm. The protein resides in the nucleolus. The enzyme catalyses Exonucleolytic cleavage of poly(A) to 5'-AMP.. 3'-exoribonuclease that has a preference for poly(A) tails of mRNAs, thereby efficiently degrading poly(A) tails. Exonucleolytic degradation of the poly(A) tail is often the first step in the decay of eukaryotic mRNAs and is also used to silence certain maternal mRNAs translationally during oocyte maturation and early embryonic development. Involved in nonsense-mediated mRNA decay, a critical process of selective degradation of mRNAs that contain premature stop codons. Also involved in degradation of inherently unstable mRNAs that contain AU-rich elements (AREs) in their 3'-UTR, possibly via its interaction with KHSRP. Probably mediates the removal of poly(A) tails of AREs mRNAs, which constitutes the first step of destabilization. Interacts with both the 3'-end poly(A) tail and the 5'-end cap structure during degradation, the interaction with the cap structure being required for an efficient degradation of poly(A) tails. Also able to recognize poly(A) tails of microRNAs such as MIR21 and H/ACA box snoRNAs (small nucleolar RNAs) leading to microRNAs degradation or snoRNA increased stability. The protein is Poly(A)-specific ribonuclease PARN (PARN) of Bos taurus (Bovine).